Reading from the N-terminus, the 377-residue chain is 2-iminoacetate synthase (377 aa).

One can recognise a Radical SAM core domain in the interval 71–301 (NTVSFYVPLY…PEIELSLSTR (231 aa)). [4Fe-4S] cluster is bound by residues cysteine 85, cysteine 89, and cysteine 92.

The protein belongs to the radical SAM superfamily. ThiH family. In terms of assembly, forms a heterodimer with ThiG. The cofactor is [4Fe-4S] cluster.

The enzyme catalyses L-tyrosine + S-adenosyl-L-methionine + NADPH = 2-iminoacetate + 4-methylphenol + 5'-deoxyadenosine + L-methionine + NADP(+). It participates in cofactor biosynthesis; thiamine diphosphate biosynthesis. In terms of biological role, catalyzes the radical-mediated cleavage of tyrosine to 2-iminoacetate and 4-cresol. The sequence is that of 2-iminoacetate synthase (thiH) from Salmonella typhimurium (strain LT2 / SGSC1412 / ATCC 700720).